A 456-amino-acid chain; its full sequence is Methylenetetrahydrofolate--tRNA-(uracil-5-)-methyltransferase TrmFO (456 aa).

An FAD-binding site is contributed by 11 to 16 (GAGLAG).

It belongs to the MnmG family. TrmFO subfamily. It depends on FAD as a cofactor.

The protein resides in the cytoplasm. The catalysed reaction is uridine(54) in tRNA + (6R)-5,10-methylene-5,6,7,8-tetrahydrofolate + NADH + H(+) = 5-methyluridine(54) in tRNA + (6S)-5,6,7,8-tetrahydrofolate + NAD(+). It catalyses the reaction uridine(54) in tRNA + (6R)-5,10-methylene-5,6,7,8-tetrahydrofolate + NADPH + H(+) = 5-methyluridine(54) in tRNA + (6S)-5,6,7,8-tetrahydrofolate + NADP(+). Its function is as follows. Catalyzes the folate-dependent formation of 5-methyl-uridine at position 54 (M-5-U54) in all tRNAs. The chain is Methylenetetrahydrofolate--tRNA-(uracil-5-)-methyltransferase TrmFO from Synechococcus sp. (strain CC9605).